Reading from the N-terminus, the 235-residue chain is Large ribosomal subunit protein uL1 (235 aa).

Belongs to the universal ribosomal protein uL1 family. In terms of assembly, part of the 50S ribosomal subunit.

In terms of biological role, binds directly to 23S rRNA. The L1 stalk is quite mobile in the ribosome, and is involved in E site tRNA release. Its function is as follows. Protein L1 is also a translational repressor protein, it controls the translation of the L11 operon by binding to its mRNA. This Methylobacterium sp. (strain 4-46) protein is Large ribosomal subunit protein uL1.